Here is a 367-residue protein sequence, read N- to C-terminus: tRNA/tmRNA (uracil-C(5))-methyltransferase (367 aa).

The S-adenosyl-L-methionine site is built by Gln-190, Tyr-218, Asn-223, Glu-239, and Asp-299. The active-site Nucleophile is Cys-324. The active-site Proton acceptor is the Glu-358.

The protein belongs to the class I-like SAM-binding methyltransferase superfamily. RNA M5U methyltransferase family. TrmA subfamily.

The catalysed reaction is uridine(54) in tRNA + S-adenosyl-L-methionine = 5-methyluridine(54) in tRNA + S-adenosyl-L-homocysteine + H(+). It carries out the reaction uridine(341) in tmRNA + S-adenosyl-L-methionine = 5-methyluridine(341) in tmRNA + S-adenosyl-L-homocysteine + H(+). In terms of biological role, dual-specificity methyltransferase that catalyzes the formation of 5-methyluridine at position 54 (m5U54) in all tRNAs, and that of position 341 (m5U341) in tmRNA (transfer-mRNA). This is tRNA/tmRNA (uracil-C(5))-methyltransferase from Erwinia tasmaniensis (strain DSM 17950 / CFBP 7177 / CIP 109463 / NCPPB 4357 / Et1/99).